The sequence spans 502 residues: Glycerol kinase (502 aa).

Thr14 contacts ADP. Positions 14, 15, and 16 each coordinate ATP. Thr14 lines the sn-glycerol 3-phosphate pocket. Arg18 lines the ADP pocket. Residues Arg84, Glu85, Tyr136, and Asp246 each contribute to the sn-glycerol 3-phosphate site. Glycerol is bound by residues Arg84, Glu85, Tyr136, Asp246, and Gln247. ADP-binding residues include Thr268 and Gly311. Positions 268, 311, 315, and 412 each coordinate ATP. Residues Gly412 and Asn416 each contribute to the ADP site.

Belongs to the FGGY kinase family. As to quaternary structure, homotetramer and homodimer (in equilibrium). Heterodimer with EIIA-Glc. Binds 1 zinc ion per glycerol kinase EIIA-Glc dimer. The zinc ion is important for dimerization.

It carries out the reaction glycerol + ATP = sn-glycerol 3-phosphate + ADP + H(+). Its pathway is polyol metabolism; glycerol degradation via glycerol kinase pathway; sn-glycerol 3-phosphate from glycerol: step 1/1. With respect to regulation, activity of this regulatory enzyme is affected by several metabolites. Allosterically and non-competitively inhibited by fructose 1,6-bisphosphate (FBP) and unphosphorylated phosphocarrier protein EIIA-Glc (III-Glc), an integral component of the bacterial phosphotransferase (PTS) system. Functionally, key enzyme in the regulation of glycerol uptake and metabolism. Catalyzes the phosphorylation of glycerol to yield sn-glycerol 3-phosphate. The chain is Glycerol kinase from Salmonella heidelberg (strain SL476).